Here is a 209-residue protein sequence, read N- to C-terminus: Ribosomal RNA large subunit methyltransferase E (209 aa).

Positions 63, 65, 83, 99, and 124 each coordinate S-adenosyl-L-methionine. Lys-164 serves as the catalytic Proton acceptor.

This sequence belongs to the class I-like SAM-binding methyltransferase superfamily. RNA methyltransferase RlmE family.

The protein resides in the cytoplasm. It catalyses the reaction uridine(2552) in 23S rRNA + S-adenosyl-L-methionine = 2'-O-methyluridine(2552) in 23S rRNA + S-adenosyl-L-homocysteine + H(+). Specifically methylates the uridine in position 2552 of 23S rRNA at the 2'-O position of the ribose in the fully assembled 50S ribosomal subunit. The sequence is that of Ribosomal RNA large subunit methyltransferase E from Photobacterium profundum (strain SS9).